The primary structure comprises 76 residues: Small ribosomal subunit protein bS18 (76 aa).

This sequence belongs to the bacterial ribosomal protein bS18 family. Part of the 30S ribosomal subunit. Forms a tight heterodimer with protein bS6.

Functionally, binds as a heterodimer with protein bS6 to the central domain of the 16S rRNA, where it helps stabilize the platform of the 30S subunit. The polypeptide is Small ribosomal subunit protein bS18 (Stenotrophomonas maltophilia (strain R551-3)).